The sequence spans 447 residues: Ribosomal protein uS12 methylthiotransferase RimO (447 aa).

The region spanning 10 to 120 is the MTTase N-terminal domain; the sequence is PKVGFVSLGC…VVNAVHDVVP (111 aa). 6 residues coordinate [4Fe-4S] cluster: C19, C55, C84, C153, C157, and C160. The 239-residue stretch at 139 to 377 folds into the Radical SAM core domain; sequence LTPRHYAYLK…MAHQQAISAA (239 aa). The region spanning 380-447 is the TRAM domain; it reads QMKIGKEIEV…DEYDLWAEML (68 aa).

This sequence belongs to the methylthiotransferase family. RimO subfamily. The cofactor is [4Fe-4S] cluster.

It localises to the cytoplasm. The enzyme catalyses L-aspartate(89)-[ribosomal protein uS12]-hydrogen + (sulfur carrier)-SH + AH2 + 2 S-adenosyl-L-methionine = 3-methylsulfanyl-L-aspartate(89)-[ribosomal protein uS12]-hydrogen + (sulfur carrier)-H + 5'-deoxyadenosine + L-methionine + A + S-adenosyl-L-homocysteine + 2 H(+). In terms of biological role, catalyzes the methylthiolation of an aspartic acid residue of ribosomal protein uS12. The polypeptide is Ribosomal protein uS12 methylthiotransferase RimO (Pseudomonas savastanoi pv. phaseolicola (strain 1448A / Race 6) (Pseudomonas syringae pv. phaseolicola (strain 1448A / Race 6))).